Here is a 225-residue protein sequence, read N- to C-terminus: UPF0758 protein Shal_0429 (225 aa).

An MPN domain is found at 102 to 224 (ILSDPDLTRD…IVSFAERGWI (123 aa)). 3 residues coordinate Zn(2+): His173, His175, and Asp186. Positions 173 to 186 (HNHPSGIAEPSTAD) match the JAMM motif motif.

This sequence belongs to the UPF0758 family.

This chain is UPF0758 protein Shal_0429, found in Shewanella halifaxensis (strain HAW-EB4).